A 242-amino-acid chain; its full sequence is E3 ubiquitin-protein ligase AIRP2 (242 aa).

The segment at 146–184 (CGICLEIRNKVVLPTCNHSMCINCYRNWRARSQSCPFCR) adopts an RING-type zinc-finger fold.

Interacts with ATP1/SDIRIP1. Expressed in germinating seeds, flower organs and siliques.

The protein resides in the cytoplasm. It is found in the cytosol. It catalyses the reaction S-ubiquitinyl-[E2 ubiquitin-conjugating enzyme]-L-cysteine + [acceptor protein]-L-lysine = [E2 ubiquitin-conjugating enzyme]-L-cysteine + N(6)-ubiquitinyl-[acceptor protein]-L-lysine.. In terms of biological role, possesses E3 ubiquitin-protein ligase activity in vitro when associated with the E2 enzyme UBC8 in vitro. Plays combinatory roles with AIRP1 in the positive regulation of the abscisic acid-mediated drought stress response. Plays a positive role in abscisic acid- and high salinity-regulated seed germination through the ubiquitin-proteasome-dependent down-regulation of ATP1/SDIRIP1. The sequence is that of E3 ubiquitin-protein ligase AIRP2 from Arabidopsis thaliana (Mouse-ear cress).